The following is a 578-amino-acid chain: Arginine--tRNA ligase (578 aa).

A 'HIGH' region motif is present at residues 127-137; it reads PNLAKEMHVGH.

The protein belongs to the class-I aminoacyl-tRNA synthetase family. In terms of assembly, monomer.

The protein resides in the cytoplasm. The catalysed reaction is tRNA(Arg) + L-arginine + ATP = L-arginyl-tRNA(Arg) + AMP + diphosphate. This chain is Arginine--tRNA ligase, found in Pseudomonas entomophila (strain L48).